The sequence spans 63 residues: Beta-defensin 38 (63 aa).

An N-terminal signal peptide occupies residues 1–21 (MKISCFLLLVLSLYLFQVNQA). Cystine bridges form between Cys29/Cys58, Cys36/Cys51, and Cys41/Cys59.

Belongs to the beta-defensin family.

It localises to the secreted. Has antibacterial activity. In Rattus norvegicus (Rat), this protein is Beta-defensin 38 (Defb38).